We begin with the raw amino-acid sequence, 282 residues long: Succinate dehydrogenase [ubiquinone] iron-sulfur subunit, mitochondrial (282 aa).

A mitochondrion-targeting transit peptide spans 1–21; it reads MLRGSTSVCRSLELVTQAARY. Residues 39–129 form the 2Fe-2S ferredoxin-type domain; it reads EIYRFNPEEP…TTKIYPLPHM (91 aa). [2Fe-2S] cluster is bound by residues Cys89, Cys94, Cys97, and Cys109. Positions 172-202 constitute a 4Fe-4S ferredoxin-type domain; it reads EQEKLDGLYECILCACCSASCPSYWWNADKY. The [4Fe-4S] cluster site is built by Cys182, Cys185, and Cys188. Cys192 provides a ligand contact to [3Fe-4S] cluster. Trp197 is an a rhodoquinol binding site. Trp197 lines the a ubiquinone pocket. [3Fe-4S] cluster-binding residues include Cys239 and Cys245. Position 249 (Cys249) interacts with [4Fe-4S] cluster.

The protein belongs to the succinate dehydrogenase/fumarate reductase iron-sulfur protein family. As to quaternary structure, component of the mitochondrial electron transport chain complex II composed of four subunits: a flavoprotein (Fp), an iron-sulfur protein (Ip), and a large cytochrome b (CybL) subunit and a small cytochrome b (CybS) subunit. There are 2 developmental stage-specific forms of complex II which have the Ip and CybL subunits in common. Complex II from the free-living larvae (aerobic environment) acts as a succinate dehydrogenase and is composed of the common subunit Ip and CybL and the stage specific subunits FpL and CybSL. Complex II from parasitic larvae and adults (anaerobic environment) acts as a fumarate reductase and is composed of the common subunit Ip and CybL and the stage specific subunits FpA and CybSA. It depends on [2Fe-2S] cluster as a cofactor. The cofactor is [3Fe-4S] cluster. [4Fe-4S] cluster serves as cofactor. As to expression, expressed in adult muscles (at protein level).

The protein localises to the mitochondrion inner membrane. The catalysed reaction is a ubiquinone + succinate = a ubiquinol + fumarate. It carries out the reaction a rhodoquinone + succinate = a rhodoquinol + fumarate. Its pathway is carbohydrate metabolism; tricarboxylic acid cycle; fumarate from succinate (eukaryal route): step 1/1. Inhibited by the fungicide flutolanil. Functionally, iron-sulfur protein (Ip) subunit of the mitochondrial electron transport chain complex II which, together with the flavoprotein (Fp) subunit forms the catalytic core of the complex. During the free-living egg-larvae stages, which occur in an aerobic environment, complex II acts as a succinate dehydrogenase by transferring electrons from succinate to ubiquinone. During the parasitic larvae and adult stages, which occur in an anaerobic environment, complex II acts as a fumarate reductase by transferring electrons from rhodoquinol to fumarate. This is Succinate dehydrogenase [ubiquinone] iron-sulfur subunit, mitochondrial from Ascaris suum (Pig roundworm).